Here is a 544-residue protein sequence, read N- to C-terminus: Baeyer-Villiger monooxygenase (544 aa).

FAD is bound by residues Phe27, Glu47, Trp56, Asp67, Tyr73, and Val119.

This sequence belongs to the FAD-binding monooxygenase family. FAD serves as cofactor.

Catalyzes a Baeyer-Villiger oxidation reaction, i.e. the insertion of an oxygen atom into a carbon-carbon bond adjacent to a carbonyl, which converts ketones to esters or lactones using NADPH as an electron donor. Besides cycloalkanones, can use cyclic alpha,beta-unsaturated ketones as substrates, leading to enol-lactones. Can also act on methylated cycloalkanones and methylated cycloalkenones with high enantioselectivity in some cases. In Parvibaculum lavamentivorans (strain DS-1 / DSM 13023 / NCIMB 13966), this protein is Baeyer-Villiger monooxygenase.